Here is a 101-residue protein sequence, read N- to C-terminus: Gamma-secretase subunit PEN-2 (101 aa).

At 1-17 (MNLERVSNEEKLNLCRK) the chain is on the cytoplasmic side. The segment at residues 18 to 36 (YYLGGFAFLPFLWLVNIFW) is an intramembrane region (helical). The Cytoplasmic portion of the chain corresponds to 37–57 (FFREAFIVPAYTEQSQIKGYV). Residues 58 to 78 (WRSAVGFFLWVIVLSTWITIF) form a helical membrane-spanning segment. At 79–101 (QIYRPRWGALGDYLSFTIPLGTP) the chain is on the lumenal side.

The protein belongs to the PEN-2 family. As to quaternary structure, the functional gamma-secretase complex is composed of at least four polypeptides: a presenilin homodimer (PSEN1 or PSEN2), nicastrin (NCSTN), APH1 (APH1A or APH1B) and PSENEN.

The protein resides in the endoplasmic reticulum membrane. The protein localises to the golgi apparatus. It localises to the golgi stack membrane. It is found in the cell membrane. Its subcellular location is the membrane. In terms of biological role, essential subunit of the gamma-secretase complex, an endoprotease complex that catalyzes the intramembrane cleavage of integral membrane proteins such as Notch receptors and APP (amyloid-beta precursor protein). The gamma-secretase complex plays a role in Notch and Wnt signaling cascades and regulation of downstream processes via its role in processing key regulatory proteins, and by regulating cytosolic CTNNB1 levels. PSENEN modulates both endoproteolysis of presenilin and gamma-secretase activity. The protein is Gamma-secretase subunit PEN-2 (PSENEN) of Bos taurus (Bovine).